The sequence spans 324 residues: 3'-5' exoribonuclease YhaM (324 aa).

The region spanning 163-279 (HVVSMLELAK…LHYIDNLDAK (117 aa)) is the HD domain.

This sequence belongs to the YhaM family.

Shows a 3'-5' exoribonuclease activity. The polypeptide is 3'-5' exoribonuclease YhaM (Geobacillus sp. (strain WCH70)).